A 96-amino-acid chain; its full sequence is Putative regulatory protein DET0036 (96 aa).

It belongs to the RemA family.

The sequence is that of Putative regulatory protein DET0036 from Dehalococcoides mccartyi (strain ATCC BAA-2266 / KCTC 15142 / 195) (Dehalococcoides ethenogenes (strain 195)).